The chain runs to 404 residues: Subtilisin-like protease 3 (404 aa).

Positions 1-20 (MLFSKSLVALVACFLPLIVS) are cleaved as a signal peptide. Positions 21–114 (ATELKLRNAA…VDKDVKVSAY (94 aa)) are excised as a propeptide. Residues 38–112 (SYIVVYKDID…AYVDKDVKVS (75 aa)) enclose the Inhibitor I9 domain. The region spanning 123–404 (PWGLDRISHR…DNLAYNDDGY (282 aa)) is the Peptidase S8 domain. Asparagine 133 carries N-linked (GlcNAc...) asparagine glycosylation. Catalysis depends on charge relay system residues aspartate 158 and histidine 190. 5 N-linked (GlcNAc...) asparagine glycosylation sites follow: asparagine 243, asparagine 251, asparagine 286, asparagine 307, and asparagine 340. Serine 347 acts as the Charge relay system in catalysis. Residue asparagine 366 is glycosylated (N-linked (GlcNAc...) asparagine).

This sequence belongs to the peptidase S8 family.

It is found in the secreted. Secreted subtilisin-like serine endopeptidase. Mediates the degradation of collagen, the major structural protein in the mammalian host. Degrades the nonhelical regions of collagen that function in the cross-linking of the helical components. May function as virulence factor involved in epidermal wing necrosis observed in white nose syndrome (WNS) in bats. The protein is Subtilisin-like protease 3 of Pseudogymnoascus destructans (strain ATCC MYA-4855 / 20631-21) (Bat white-nose syndrome fungus).